The primary structure comprises 390 residues: Phosphopentomutase (390 aa).

Mn(2+)-binding residues include Asp10, Asp284, His289, Asp325, His326, and His337.

Belongs to the phosphopentomutase family. It depends on Mn(2+) as a cofactor.

Its subcellular location is the cytoplasm. It catalyses the reaction 2-deoxy-alpha-D-ribose 1-phosphate = 2-deoxy-D-ribose 5-phosphate. It carries out the reaction alpha-D-ribose 1-phosphate = D-ribose 5-phosphate. Its pathway is carbohydrate degradation; 2-deoxy-D-ribose 1-phosphate degradation; D-glyceraldehyde 3-phosphate and acetaldehyde from 2-deoxy-alpha-D-ribose 1-phosphate: step 1/2. Its function is as follows. Isomerase that catalyzes the conversion of deoxy-ribose 1-phosphate (dRib-1-P) and ribose 1-phosphate (Rib-1-P) to deoxy-ribose 5-phosphate (dRib-5-P) and ribose 5-phosphate (Rib-5-P), respectively. This chain is Phosphopentomutase, found in Clostridioides difficile (strain 630) (Peptoclostridium difficile).